The chain runs to 349 residues: MSILFHAYPLARPALFAMDAETAHEVTLAQLQRAYDCGLTRKLLHAQPEAPATLMGLSLRNPVGLAAGLDKNGAHIDALGNLGFGFVEVGTVTPRAQPGNPKPRMFRLPRANALINRLGFNNQGLDAFIANVQRSQWRSQGGILGLNIGKNADTPIERAAEDYLISLAGVYPHADYVTVNISSPNTKNLRALQGGDELSALLGQLQERRLALADQHQRHVPLAVKIAPDLSDDQIDAIAEILPRHGIDGVIATNTTLARDAVQGLPHAEEAGGVSGAPVHELSLRVIERLRSRLGDAVAIIGVGGILSGRQASEKMAAGAQAVQLYTGLIYRGPALVGECVRALAQGSR.

Residues 67–71 (AGLDK) and Thr91 contribute to the FMN site. Lys71 serves as a coordination point for substrate. Position 116–120 (116–120 (NRLGF)) interacts with substrate. The FMN site is built by Asn147 and Asn180. Asn180 contacts substrate. Ser183 acts as the Nucleophile in catalysis. Asn185 serves as a coordination point for substrate. FMN contacts are provided by Lys225 and Thr253. 254 to 255 (NT) is a substrate binding site. Residues Gly276, Gly305, and 326–327 (YT) contribute to the FMN site.

Belongs to the dihydroorotate dehydrogenase family. Type 2 subfamily. As to quaternary structure, monomer. FMN serves as cofactor.

The protein resides in the cell membrane. The catalysed reaction is (S)-dihydroorotate + a quinone = orotate + a quinol. It functions in the pathway pyrimidine metabolism; UMP biosynthesis via de novo pathway; orotate from (S)-dihydroorotate (quinone route): step 1/1. Catalyzes the conversion of dihydroorotate to orotate with quinone as electron acceptor. This Bordetella parapertussis (strain 12822 / ATCC BAA-587 / NCTC 13253) protein is Dihydroorotate dehydrogenase (quinone).